The following is a 337-amino-acid chain: Tetraacyldisaccharide 4'-kinase (337 aa).

Position 51–58 (51–58 (HLGGAGKT)) interacts with ATP.

This sequence belongs to the LpxK family.

The enzyme catalyses a lipid A disaccharide + ATP = a lipid IVA + ADP + H(+). It functions in the pathway glycolipid biosynthesis; lipid IV(A) biosynthesis; lipid IV(A) from (3R)-3-hydroxytetradecanoyl-[acyl-carrier-protein] and UDP-N-acetyl-alpha-D-glucosamine: step 6/6. Its function is as follows. Transfers the gamma-phosphate of ATP to the 4'-position of a tetraacyldisaccharide 1-phosphate intermediate (termed DS-1-P) to form tetraacyldisaccharide 1,4'-bis-phosphate (lipid IVA). The sequence is that of Tetraacyldisaccharide 4'-kinase from Nitrobacter winogradskyi (strain ATCC 25391 / DSM 10237 / CIP 104748 / NCIMB 11846 / Nb-255).